Here is a 427-residue protein sequence, read N- to C-terminus: 3-isopropylmalate dehydratase large subunit (427 aa).

Cysteine 308, cysteine 368, and cysteine 371 together coordinate [4Fe-4S] cluster.

The protein belongs to the aconitase/IPM isomerase family. LeuC type 2 subfamily. Heterodimer of LeuC and LeuD. [4Fe-4S] cluster serves as cofactor.

It carries out the reaction (2R,3S)-3-isopropylmalate = (2S)-2-isopropylmalate. The protein operates within amino-acid biosynthesis; L-leucine biosynthesis; L-leucine from 3-methyl-2-oxobutanoate: step 2/4. Catalyzes the isomerization between 2-isopropylmalate and 3-isopropylmalate, via the formation of 2-isopropylmaleate. The polypeptide is 3-isopropylmalate dehydratase large subunit (Geotalea uraniireducens (strain Rf4) (Geobacter uraniireducens)).